The following is a 363-amino-acid chain: DNA replication and repair protein RecF (363 aa).

31 to 38 contributes to the ATP binding site; that stretch reads GANSSGKT.

This sequence belongs to the RecF family.

It localises to the cytoplasm. Its function is as follows. The RecF protein is involved in DNA metabolism; it is required for DNA replication and normal SOS inducibility. RecF binds preferentially to single-stranded, linear DNA. It also seems to bind ATP. This chain is DNA replication and repair protein RecF, found in Nitrosococcus oceani (strain ATCC 19707 / BCRC 17464 / JCM 30415 / NCIMB 11848 / C-107).